A 593-amino-acid polypeptide reads, in one-letter code: MLILNGFSSATLALITPPFLPKGGKALSQSGPDGLASITLPLPISAERGFAPALALHYSSGGGNGPFGVGWSCATMSIARRTSHGVPQYNDSDEFLGPDGEVLVQTLSTGDAPNPVTCFAYGDVSFPQSYTVTRYQPRTESSFYRLEYWVGNSNGDDFWLLHDSNGILHLLGKTAAARLSDPQAASHTAQWLVEESVTPAGEHIYYSYLAENGDNVDLNGNEAGRDRSAMRYLSKVQYGNATPAADLYLWTSATPAVQWLFTLVFDYGERGVDPQVPPAFTAQNSWLARQDPFSLYNYGFEIRLHRLCRQVLMFHHFPDELGEADTLVSRLLLEYDENPILTQLCAARTLAYEGDGYRRAPVNNMMPPPPPPPPPMMGGNSSRPKSKWAIVEESKQIQALRYYSAQGYSVINKYLRGDDYPETQAKETLLSRDYLSTNEPSDEEFKNAMSVYINDIAEGLSSLPETDHRVVYRGLKLDKPALSDVLKEYTTIGNIIIDKAFMSTSPDKAWINDTILNIYLEKGHKGRILGDVAHFKGEAEMLFPPNTKLKIESIVNCGSQDFASQLSKLRLSDDATADTNRIKRIINMRVLNS.

Positions Pro361–Pro384 are disordered. The span at Met366 to Met376 shows a compositional bias: pro residues. The TR mART core domain maps to Pro375–Asp578. Catalysis depends on residues Arg473, Ser503, and Glu540.

This sequence belongs to the SpvB family.

The protein resides in the secreted. It catalyses the reaction L-arginyl-[protein] + NAD(+) = N(omega)-(ADP-D-ribosyl)-L-arginyl-[protein] + nicotinamide + H(+). Functionally, mono-ADP-ribosylates muscle and non-muscle actin. ADP-ribosylates Chinese hamster ovary and HeLa cell actin as well as rabbit muscle, porcine heart actin and non-muscle beta- and gamma-actin. ADP-ribosylation of actin prevents the polymerization of G actin to F actin, causing actin filament depolymerization, destruction of the cytoskeleton and cytotoxicity; this requires only the C-terminal 120 residues. Does not possess NAD(+)-glycohydrolase activity, unlike most mART enzymes. This is Mono(ADP-ribosyl)transferase SpvB (spvB) from Salmonella dublin.